The sequence spans 94 residues: Pyrimidine/purine nucleoside phosphorylase (94 aa).

The protein belongs to the nucleoside phosphorylase PpnP family.

It catalyses the reaction a purine D-ribonucleoside + phosphate = a purine nucleobase + alpha-D-ribose 1-phosphate. The catalysed reaction is adenosine + phosphate = alpha-D-ribose 1-phosphate + adenine. The enzyme catalyses cytidine + phosphate = cytosine + alpha-D-ribose 1-phosphate. It carries out the reaction guanosine + phosphate = alpha-D-ribose 1-phosphate + guanine. It catalyses the reaction inosine + phosphate = alpha-D-ribose 1-phosphate + hypoxanthine. The catalysed reaction is thymidine + phosphate = 2-deoxy-alpha-D-ribose 1-phosphate + thymine. The enzyme catalyses uridine + phosphate = alpha-D-ribose 1-phosphate + uracil. It carries out the reaction xanthosine + phosphate = alpha-D-ribose 1-phosphate + xanthine. In terms of biological role, catalyzes the phosphorolysis of diverse nucleosides, yielding D-ribose 1-phosphate and the respective free bases. Can use uridine, adenosine, guanosine, cytidine, thymidine, inosine and xanthosine as substrates. Also catalyzes the reverse reactions. The polypeptide is Pyrimidine/purine nucleoside phosphorylase (Shigella dysenteriae serotype 1 (strain Sd197)).